Here is a 306-residue protein sequence, read N- to C-terminus: Brix domain-containing protein C4F8.04 (306 aa).

The tract at residues 16 to 49 is disordered; sequence KALHQKNKDKLERRKERAKEEEKDPEKKRLRLSE. Over residues 21-42 the composition is skewed to basic and acidic residues; sequence KNKDKLERRKERAKEEEKDPEK. The region spanning 94-283 is the Brix domain; it reads PKLLVTTSKR…LRMVQKGVWD (190 aa).

The chain is Brix domain-containing protein C4F8.04 from Schizosaccharomyces pombe (strain 972 / ATCC 24843) (Fission yeast).